The primary structure comprises 82 residues: ATP synthase subunit c, chloroplastic (82 aa).

Methionine 1 carries the post-translational modification N-formylmethionine. 2 helical membrane-spanning segments follow: residues 3 to 23 (PIVAATSVVSAGLAVGLAAIG) and 57 to 77 (FAFMESLTIYGLVVALALLFA).

The protein belongs to the ATPase C chain family. In terms of assembly, F-type ATPases have 2 components, F(1) - the catalytic core - and F(0) - the membrane proton channel. F(1) has five subunits: alpha(3), beta(3), gamma(1), delta(1), epsilon(1). F(0) has four main subunits: a(1), b(1), b'(1) and c(10-14). The alpha and beta chains form an alternating ring which encloses part of the gamma chain. F(1) is attached to F(0) by a central stalk formed by the gamma and epsilon chains, while a peripheral stalk is formed by the delta, b and b' chains.

The protein resides in the plastid. Its subcellular location is the chloroplast thylakoid membrane. Functionally, f(1)F(0) ATP synthase produces ATP from ADP in the presence of a proton or sodium gradient. F-type ATPases consist of two structural domains, F(1) containing the extramembraneous catalytic core and F(0) containing the membrane proton channel, linked together by a central stalk and a peripheral stalk. During catalysis, ATP synthesis in the catalytic domain of F(1) is coupled via a rotary mechanism of the central stalk subunits to proton translocation. Its function is as follows. Key component of the F(0) channel; it plays a direct role in translocation across the membrane. A homomeric c-ring of between 10-14 subunits forms the central stalk rotor element with the F(1) delta and epsilon subunits. The sequence is that of ATP synthase subunit c, chloroplastic from Chlamydomonas reinhardtii (Chlamydomonas smithii).